The primary structure comprises 99 residues: Defensin-like protein 2 (99 aa).

The signal sequence occupies residues 1 to 30 (MAMAKKSVSSFTLIFILVLVIFEVPEIKAQ). 4 cysteine pairs are disulfide-bonded: Cys34/Cys86, Cys47/Cys71, Cys56/Cys81, and Cys60/Cys83. Positions 94–99 (ILRGGI) are excised as a propeptide.

Belongs to the DEFL family. Protease inhibitor I18 (RTI/MTI-2) subfamily.

It localises to the secreted. Functionally, inhibits bovine beta-trypsin and alpha-chymotrypsin on a 1:1 molar basis. This Sinapis alba (White mustard) protein is Defensin-like protein 2.